The following is a 483-amino-acid chain: Regulatory protein ViaA (483 aa).

This sequence belongs to the ViaA family. As to quaternary structure, homodimer. Interacts with RavA.

The protein resides in the cytoplasm. Its function is as follows. Component of the RavA-ViaA chaperone complex, which may act on the membrane to optimize the function of some of the respiratory chains. ViaA stimulates the ATPase activity of RavA. In Escherichia coli (strain SMS-3-5 / SECEC), this protein is Regulatory protein ViaA.